The chain runs to 147 residues: Protein phosphatase 1 regulatory subunit 14B (147 aa).

Over residues 1 to 15 (MADSGPAGGAALAAP) the composition is skewed to low complexity. Residues 1-55 (MADSGPAGGAALAAPAPGPGSGGAGPRVYFQSPPGAAGEGPGGADDEGPVRRQGK) are disordered. Ala-2 bears the N-acetylalanine mark. The residue at position 21 (Ser-21) is a Phosphoserine. Tyr-29 is modified (phosphotyrosine). Phosphoserine is present on Ser-32. Thr-57 carries the phosphothreonine modification. A coiled-coil region spans residues 61-103 (DRKELRKRLNLEEWILEQLTRLYDCQEEEIPELEIDVDELLDM).

The protein belongs to the PP1 inhibitor family. In terms of processing, phosphorylated primarily on Thr-57 by PKC (in vitro). An unknown Ser is also phosphorylated by PKC (in vitro).

It localises to the cytoplasm. Its function is as follows. Inhibitor of PPP1CA. Has over 50-fold higher inhibitory activity when phosphorylated. This is Protein phosphatase 1 regulatory subunit 14B (PPP1R14B) from Sus scrofa (Pig).